A 526-amino-acid chain; its full sequence is Peptide chain release factor 3 (526 aa).

The tr-type G domain maps to 8–277 (NKRRTFAIIS…GLTEWAPKPQ (270 aa)). GTP contacts are provided by residues 17–24 (SHPDAGKT), 85–89 (DTPGH), and 139–142 (NKLD).

This sequence belongs to the TRAFAC class translation factor GTPase superfamily. Classic translation factor GTPase family. PrfC subfamily.

The protein resides in the cytoplasm. In terms of biological role, increases the formation of ribosomal termination complexes and stimulates activities of RF-1 and RF-2. It binds guanine nucleotides and has strong preference for UGA stop codons. It may interact directly with the ribosome. The stimulation of RF-1 and RF-2 is significantly reduced by GTP and GDP, but not by GMP. The sequence is that of Peptide chain release factor 3 from Actinobacillus pleuropneumoniae serotype 5b (strain L20).